A 115-amino-acid polypeptide reads, in one-letter code: MPMFIVNTNVPRSSVPEGLLSELTQQLAQATGKPAQYIAVHVVPDQLMTFSGSSDPCALCSLHSIGKIGGAQNRTYSKLLCGLLADRLRISPDRIYINYYDMNAANVGWNGSTFA.

The active-site Proton acceptor; via imino nitrogen is Pro2. Substrate is bound by residues Lys33 and Ile65. Lys78 carries the N6-acetyllysine; alternate modification. An N6-succinyllysine; alternate modification is found at Lys78. Substrate is bound at residue Asn98.

This sequence belongs to the MIF family. In terms of assembly, homotrimer. Interacts with CXCR2 extracellular domain. Interacts with the CD74 extracellular domain, USO1, COPS5 and BNIPL.

It localises to the secreted. It is found in the cytoplasm. It carries out the reaction 3-phenylpyruvate = enol-phenylpyruvate. It catalyses the reaction L-dopachrome = 5,6-dihydroxyindole-2-carboxylate. Functionally, pro-inflammatory cytokine involved in the innate immune response to bacterial pathogens. The expression of MIF at sites of inflammation suggests a role as mediator in regulating the function of macrophages in host defense. Counteracts the anti-inflammatory activity of glucocorticoids. Has phenylpyruvate tautomerase and dopachrome tautomerase activity (in vitro), but the physiological substrate is not known. It is not clear whether the tautomerase activity has any physiological relevance, and whether it is important for cytokine activity. In Meriones unguiculatus (Mongolian jird), this protein is Macrophage migration inhibitory factor (MIF).